Here is a 236-residue protein sequence, read N- to C-terminus: Mediator of RNA polymerase II transcription subunit 20 (236 aa).

It belongs to the Mediator complex subunit 20 family. In terms of assembly, component of the Mediator complex.

It is found in the nucleus. Functionally, component of the Mediator complex, a coactivator involved in the regulated transcription of nearly all RNA polymerase II-dependent genes. Mediator functions as a bridge to convey information from gene-specific regulatory proteins to the basal RNA polymerase II transcription machinery. Mediator is recruited to promoters by direct interactions with regulatory proteins and serves as a scaffold for the assembly of a functional preinitiation complex with RNA polymerase II and the general transcription factors. The protein is Mediator of RNA polymerase II transcription subunit 20 (SRB2) of Debaryomyces hansenii (strain ATCC 36239 / CBS 767 / BCRC 21394 / JCM 1990 / NBRC 0083 / IGC 2968) (Yeast).